The following is a 236-amino-acid chain: Orotidine 5'-phosphate decarboxylase (236 aa).

Substrate is bound by residues D14, K36, 63 to 72, T122, R183, Q192, G212, and R213; that span reads DLKYHDIPNT. K65 (proton donor) is an active-site residue.

It belongs to the OMP decarboxylase family. Type 1 subfamily. Homodimer.

The enzyme catalyses orotidine 5'-phosphate + H(+) = UMP + CO2. The protein operates within pyrimidine metabolism; UMP biosynthesis via de novo pathway; UMP from orotate: step 2/2. Catalyzes the decarboxylation of orotidine 5'-monophosphate (OMP) to uridine 5'-monophosphate (UMP). This chain is Orotidine 5'-phosphate decarboxylase, found in Halorhodospira halophila (strain DSM 244 / SL1) (Ectothiorhodospira halophila (strain DSM 244 / SL1)).